A 334-amino-acid polypeptide reads, in one-letter code: Isopentenyl-diphosphate delta-isomerase (334 aa).

5–6 (RK) serves as a coordination point for substrate. Residues 60-62 (AMT), serine 90, and asparagine 117 each bind FMN. Glutamine 147 is a substrate binding site. Glutamate 148 contributes to the Mg(2+) binding site. FMN-binding positions include lysine 179, serine 204, threonine 209, 253 to 255 (GVR), and 274 to 275 (SR).

Belongs to the IPP isomerase type 2 family. In terms of assembly, homooctamer. Dimer of tetramers. It depends on FMN as a cofactor. NADPH serves as cofactor. Mg(2+) is required as a cofactor.

It localises to the cytoplasm. The catalysed reaction is isopentenyl diphosphate = dimethylallyl diphosphate. Functionally, involved in the biosynthesis of isoprenoids. Catalyzes the 1,3-allylic rearrangement of the homoallylic substrate isopentenyl (IPP) to its allylic isomer, dimethylallyl diphosphate (DMAPP). This Streptococcus gordonii (strain Challis / ATCC 35105 / BCRC 15272 / CH1 / DL1 / V288) protein is Isopentenyl-diphosphate delta-isomerase.